The sequence spans 608 residues: Preterminal protein (608 aa).

Positions 338-347 (RLPMRRRRRR) match the Nuclear localization signal motif. Positions 342–377 (RRRRRRAPPPPPMSEELSEPEVEAFPPASPPRRSFE) are disordered. At S536 the chain carries O-(5'-phospho-DNA)-serine.

Belongs to the adenoviridae terminal protein family. Heterodimer with the polymerase; this heterodimer binds to bp 9 to 18 of the genome. Interacts with host POU2F1; POU2F1 binds to the auxiliary sequences in the inverted terminal repeats and tethers the pTP-POL heterodimer to the origin DNA thereby participating in the assembly of the pre-initiation complex (POL-TP-DBP-NFIA-POU2F1). Preterminal protein is used to replicate viral genome, upon genomic encapsidation it is processed first into iTP and finally into TP by adenovirus protease.

It is found in the host nucleus matrix. Protein covalently bound to the viral DNA that acts as a primer for viral genomic replication by DNA strand displacement. Assembles on the viral origin of replication in an initiation complex with viral polymerase, DBP, host NFIA and host POU2F1/OCT1. During initiation, the polymerase covalently couples the first dCTP with Ser-580 of pTP. The terminal protein stimulates the template activity over 20 fold compared to protein-free templates. Neo-synthesized viral genomes are linked to two preterminal proteins, one for each 5' end. These new genomes are encapsidated in the nucleus, and during capsid maturation by viral protease, preterminal protein is first cleaved into intermediary (iTP), then into mature TP. May play a role in host nuclear matrix localization of genomic DNA. In Canine adenovirus serotype 1 (strain CLL) (CAdV-1), this protein is Preterminal protein.